The following is a 176-amino-acid chain: NAD(P)H-quinone oxidoreductase subunit 6, chloroplastic (176 aa).

The next 5 helical transmembrane spans lie at 10–30 (FLLV…VLLT), 32–52 (PIFS…FYIL), 61–81 (AQLL…VMFM), 95–115 (VGNG…ITII), and 152–172 (FFLP…GAIA).

This sequence belongs to the complex I subunit 6 family. In terms of assembly, NDH is composed of at least 16 different subunits, 5 of which are encoded in the nucleus.

The protein resides in the plastid. Its subcellular location is the chloroplast thylakoid membrane. It carries out the reaction a plastoquinone + NADH + (n+1) H(+)(in) = a plastoquinol + NAD(+) + n H(+)(out). It catalyses the reaction a plastoquinone + NADPH + (n+1) H(+)(in) = a plastoquinol + NADP(+) + n H(+)(out). Its function is as follows. NDH shuttles electrons from NAD(P)H:plastoquinone, via FMN and iron-sulfur (Fe-S) centers, to quinones in the photosynthetic chain and possibly in a chloroplast respiratory chain. The immediate electron acceptor for the enzyme in this species is believed to be plastoquinone. Couples the redox reaction to proton translocation, and thus conserves the redox energy in a proton gradient. The sequence is that of NAD(P)H-quinone oxidoreductase subunit 6, chloroplastic (ndhG) from Populus alba (White poplar).